Consider the following 185-residue polypeptide: MSSLRIYNDNDFSQPLVFTEDGAEISRQLNEAGIRFERWSTRELDEGATPDSILAAYQEEVEKLKAENGFTTADVVSLTPAHPQKDEFRKKFLDEHRHSEDEVRFFVRGQGLFYLHLEDKVYVVLCRKNDLISVPNGTKHWFDMGPEPEFTCVRLFTNPEGWVAQFTGDEIASKAPRFEQLIEEA.

H96, H98, E102, and H140 together coordinate Fe(2+). Ni(2+) is bound by residues H96, H98, E102, and H140.

It belongs to the acireductone dioxygenase (ARD) family. In terms of assembly, monomer. Fe(2+) serves as cofactor. The cofactor is Ni(2+).

It carries out the reaction 1,2-dihydroxy-5-(methylsulfanyl)pent-1-en-3-one + O2 = 3-(methylsulfanyl)propanoate + CO + formate + 2 H(+). The enzyme catalyses 1,2-dihydroxy-5-(methylsulfanyl)pent-1-en-3-one + O2 = 4-methylsulfanyl-2-oxobutanoate + formate + 2 H(+). Its pathway is amino-acid biosynthesis; L-methionine biosynthesis via salvage pathway; L-methionine from S-methyl-5-thio-alpha-D-ribose 1-phosphate: step 5/6. Catalyzes 2 different reactions between oxygen and the acireductone 1,2-dihydroxy-3-keto-5-methylthiopentene (DHK-MTPene) depending upon the metal bound in the active site. Fe-containing acireductone dioxygenase (Fe-ARD) produces formate and 2-keto-4-methylthiobutyrate (KMTB), the alpha-ketoacid precursor of methionine in the methionine recycle pathway. Ni-containing acireductone dioxygenase (Ni-ARD) produces methylthiopropionate, carbon monoxide and formate, and does not lie on the methionine recycle pathway. The chain is Acireductone dioxygenase from Hahella chejuensis (strain KCTC 2396).